We begin with the raw amino-acid sequence, 253 residues long: Adenylate kinase (253 aa).

Residue 15 to 20 coordinates ATP; the sequence is GSGKGT. Residues 35–64 form an NMP region; it reads SSGDLLRNAVSQNTPLGQEIKSYLDQGKLL. AMP contacts are provided by residues Ser36, Arg41, 62–64, 103–106, and Gln110; these read KLL and GFPR. The LID stretch occupies residues 143-176; that stretch reads SRYICPSCQGIYNKQQGFSRCPKCLVELTRRSDD. ATP is bound at residue Arg144. Zn(2+) is bound by residues Cys147 and Cys150. Residue 153–154 participates in ATP binding; that stretch reads IY. Cys163 and Cys166 together coordinate Zn(2+). AMP contacts are provided by Arg173 and Arg184. Ala212 lines the ATP pocket.

It belongs to the adenylate kinase family. Monomer.

Its subcellular location is the cytoplasm. It catalyses the reaction AMP + ATP = 2 ADP. It functions in the pathway purine metabolism; AMP biosynthesis via salvage pathway; AMP from ADP: step 1/1. Catalyzes the reversible transfer of the terminal phosphate group between ATP and AMP. Plays an important role in cellular energy homeostasis and in adenine nucleotide metabolism. This is Adenylate kinase from Chlamydia muridarum (strain MoPn / Nigg).